The sequence spans 599 residues: Beta-(1--&gt;2)glucan export ATP-binding/permease protein NdvA (599 aa).

Residues 21–301 (TITMCVASVL…ISAFINQTVT (281 aa)) form the ABC transmembrane type-1 domain. A run of 5 helical transmembrane segments spans residues 22 to 42 (ITMC…PVLF), 55 to 75 (IFSP…AAVF), 156 to 176 (MRMS…GQLV), 248 to 268 (MAST…VTKG), and 276 to 296 (IAFI…SAFI). The 235-residue stretch at 335–569 (IVFDNVTFEF…GGRFSDLLRA (235 aa)) folds into the ABC transporter domain. 368 to 375 (GPTGAGKT) contacts ATP.

Belongs to the ABC transporter superfamily. Beta-(1--&gt;2)glucan exporter (TC 3.A.1.108.1) family. As to quaternary structure, homodimer.

The protein localises to the cell inner membrane. It catalyses the reaction [(1-&gt;2)-beta-D-glucosyl](n)(in) + ATP + H2O = [(1-&gt;2)-beta-D-glucosyl](n)(out) + ADP + phosphate + H(+). In terms of biological role, involved in beta-(1--&gt;2)glucan export. Transmembrane domains (TMD) form a pore in the inner membrane and the ATP-binding domain (NBD) is responsible for energy generation. This Brucella suis biovar 1 (strain 1330) protein is Beta-(1--&gt;2)glucan export ATP-binding/permease protein NdvA.